The sequence spans 210 residues: Outer-membrane lipoprotein LolB (210 aa).

Residues 1–29 form the signal peptide; the sequence is MSLISNNEERSLRVRYCIAIALSALLISG. Cysteine 30 is lipidated: N-palmitoyl cysteine. Cysteine 30 carries the S-diacylglycerol cysteine lipid modification.

It belongs to the LolB family. In terms of assembly, monomer.

It localises to the cell outer membrane. In terms of biological role, plays a critical role in the incorporation of lipoproteins in the outer membrane after they are released by the LolA protein. This is Outer-membrane lipoprotein LolB from Coxiella burnetii (strain RSA 493 / Nine Mile phase I).